Consider the following 744-residue polypeptide: Potassium-transporting ATPase ATP-binding subunit (744 aa).

A run of 4 helical transmembrane segments spans residues 80 to 100 (PVMF…VMAL), 108 to 128 (AGFI…ANVA), 265 to 285 (LALT…TVTL), and 310 to 330 (VLVA…LSAI). D363 functions as the 4-aspartylphosphate intermediate in the catalytic mechanism. ATP is bound by residues D400, E404, 435–442 (FSAQTRMS), and K457. Residues D580 and D584 each contribute to the Mg(2+) site. The next 3 membrane-spanning stretches (helical) occupy residues 650 to 670 (FAII…LNVM), 678 to 698 (AVMS…PLAL), and 724 to 744 (LLLP…MGWV).

It belongs to the cation transport ATPase (P-type) (TC 3.A.3) family. Type IA subfamily. In terms of assembly, the system is composed of three essential subunits: KdpA, KdpB and KdpC.

The protein resides in the cell inner membrane. The enzyme catalyses K(+)(out) + ATP + H2O = K(+)(in) + ADP + phosphate + H(+). Functionally, part of the high-affinity ATP-driven potassium transport (or Kdp) system, which catalyzes the hydrolysis of ATP coupled with the electrogenic transport of potassium into the cytoplasm. This subunit is responsible for energy coupling to the transport system and for the release of the potassium ions to the cytoplasm. This is Potassium-transporting ATPase ATP-binding subunit from Ralstonia nicotianae (strain ATCC BAA-1114 / GMI1000) (Ralstonia solanacearum).